A 399-amino-acid chain; its full sequence is Methylmalonic aciduria type A homolog, mitochondrial (399 aa).

The transit peptide at 1 to 15 (MVVRSLLRVSRLTSA) directs the protein to the mitochondrion. GTP is bound by residues 131–139 (GSPGVGKSS), aspartate 274, and 310–312 (SIM).

This sequence belongs to the SIMIBI class G3E GTPase family. ArgK/MeaB subfamily.

It localises to the mitochondrion. Its function is as follows. May have GTPase activity. May also bind and hydrolyze ATP. May function as chaperone. Likely to have a role in propionyl-CoA and adenosylcobalamin metabolism. The sequence is that of Methylmalonic aciduria type A homolog, mitochondrial (mmaa-1) from Caenorhabditis elegans.